The chain runs to 327 residues: Regulatory protein MsrR (327 aa).

Residues 1–18 (MDKETNDNEYRRQSEHRT) show a composition bias toward basic and acidic residues. The interval 1–24 (MDKETNDNEYRRQSEHRTSAPKRK) is disordered. Residues 1–31 (MDKETNDNEYRRQSEHRTSAPKRKKKKKIRK) lie on the Cytoplasmic side of the membrane. The chain crosses the membrane as a helical; Signal-anchor for type II membrane protein span at residues 32-52 (LPIILLIVVILLIALVVYIVH). The Extracellular segment spans residues 53–327 (SYNSGVEYAK…QAIKDFLDED (275 aa)).

Belongs to the LytR/CpsA/Psr (LCP) family.

The protein localises to the cell membrane. Functionally, involved in SarA attenuation. Affects resistance to oxacillin and teicoplanin, as well as the synthesis of virulence factors. This Staphylococcus aureus (strain NCTC 8325 / PS 47) protein is Regulatory protein MsrR (msrR).